Consider the following 210-residue polypeptide: Thymidylate kinase (210 aa).

11–18 contacts ATP; the sequence is GVDGSGKS.

It belongs to the thymidylate kinase family.

The catalysed reaction is dTMP + ATP = dTDP + ADP. Phosphorylation of dTMP to form dTDP in both de novo and salvage pathways of dTTP synthesis. This chain is Thymidylate kinase, found in Mycoplasmoides gallisepticum (strain R(low / passage 15 / clone 2)) (Mycoplasma gallisepticum).